We begin with the raw amino-acid sequence, 164 residues long: Peroxynitrite isomerase (164 aa).

Residues 21–27 (GRWGGRG) carry the GXWXGXG motif. Heme b-binding residues include Lys-130 and His-156.

It belongs to the nitrobindin family. Homodimer. Requires heme b as cofactor.

The enzyme catalyses peroxynitrite = nitrate. Its pathway is nitrogen metabolism. Heme-binding protein able to scavenge peroxynitrite and to protect free L-tyrosine against peroxynitrite-mediated nitration, by acting as a peroxynitrite isomerase that converts peroxynitrite to nitrate. Therefore, this protein likely plays a role in peroxynitrite sensing and in the detoxification of reactive nitrogen and oxygen species (RNS and ROS, respectively). Is able to bind nitric oxide (NO) in vitro, but may act as a sensor of peroxynitrite levels in vivo. The polypeptide is Peroxynitrite isomerase (Nocardioides sp. (strain ATCC BAA-499 / JS614)).